The primary structure comprises 525 residues: MSNIHEHKILILDFGSQYTQLIARRIREIGVYCELWAWDVTEAQIREFAPNGIVLAGGPESVTEDNSPRAPEYVFDAGVPVLGICYGMQTMSEQLGGKVIQGVGEREFGYAQVEVLTDSALLRHIEDGISDAGKPVLDVWMSHGDKVSAIPEGFVAVAKTETCPFAVMANEDKKFYGVQFHPEVTHTRQGKRMLEHFVMDICGCDNKWQPASIIEDAVERIKAQVGDDEVILGLSGGVDSSVTAMLLHRAIGERLTCVFVDNGLLRLNEAKQVLEMFGDHFGLNIVHVDAENRFLEALKGENDPEAKRKIIGRVFVEIFDEEASKCVNAKWLAQGTIYPDVIESAGSATGKAHVIKSHHNVGGLPDDMELGLVEPLRELFKDEVRKIGLELGLPYDMLYRHPFPGPGLGVRVLGEVKKEYCDLLRRADAIFIEELHRADLYNKVSQAFTVFLPVRSVGVMGDGRKYDWVVSLRAVETIDFMTAHWAHLPYDFLGRVSNRIINEVDGISRVVYDISGKPPATIEWE.

A Glutamine amidotransferase type-1 domain is found at 8-207 (KILILDFGSQ…VMDICGCDNK (200 aa)). C85 (nucleophile) is an active-site residue. Residues H181 and E183 contribute to the active site. Residues 208–400 (WQPASIIEDA…LGLPYDMLYR (193 aa)) form the GMPS ATP-PPase domain. 235–241 (SGGVDSS) lines the ATP pocket.

As to quaternary structure, homodimer.

The catalysed reaction is XMP + L-glutamine + ATP + H2O = GMP + L-glutamate + AMP + diphosphate + 2 H(+). It functions in the pathway purine metabolism; GMP biosynthesis; GMP from XMP (L-Gln route): step 1/1. Catalyzes the synthesis of GMP from XMP. The polypeptide is GMP synthase [glutamine-hydrolyzing] (Shewanella amazonensis (strain ATCC BAA-1098 / SB2B)).